The following is a 153-amino-acid chain: Transcription antitermination protein NusB (153 aa).

Belongs to the NusB family.

Involved in transcription antitermination. Required for transcription of ribosomal RNA (rRNA) genes. Binds specifically to the boxA antiterminator sequence of the ribosomal RNA (rrn) operons. The protein is Transcription antitermination protein NusB of Fusobacterium nucleatum subsp. nucleatum (strain ATCC 25586 / DSM 15643 / BCRC 10681 / CIP 101130 / JCM 8532 / KCTC 2640 / LMG 13131 / VPI 4355).